Reading from the N-terminus, the 1071-residue chain is ATP-dependent helicase/deoxyribonuclease subunit B (1071 aa).

It belongs to the helicase family. AddB/RexB type 2 subfamily. In terms of assembly, heterodimer of AddA and RexB. Mg(2+) serves as cofactor.

Functionally, the heterodimer acts as both an ATP-dependent DNA helicase and an ATP-dependent, dual-direction single-stranded exonuclease. Recognizes the chi site generating a DNA molecule suitable for the initiation of homologous recombination. This subunit has 5' -&gt; 3' nuclease activity but not helicase activity. The sequence is that of ATP-dependent helicase/deoxyribonuclease subunit B from Streptococcus pyogenes serotype M12 (strain MGAS9429).